The chain runs to 122 residues: Alpha-amylase/trypsin inhibitor (122 aa).

5 cysteine pairs are disulfide-bonded: Cys6–Cys55, Cys20–Cys44, Cys29–Cys85, Cys45–Cys103, and Cys57–Cys114.

Belongs to the protease inhibitor I6 (cereal trypsin/alpha-amylase inhibitor) family. As to expression, seeds.

The protein localises to the secreted. Functionally, may play a protective role against endo- and exogenous hydrolytic activities in the Ragi seeds. In Eleusine coracana (Indian finger millet), this protein is Alpha-amylase/trypsin inhibitor.